The primary structure comprises 295 residues: Nucleotide-binding protein YjiE (295 aa).

Position 12 to 19 (12 to 19 (GMSGAGKT)) interacts with ATP. GTP is bound at residue 63–66 (DMRS).

Belongs to the RapZ-like family.

Functionally, displays ATPase and GTPase activities. This Lactococcus lactis subsp. lactis (strain IL1403) (Streptococcus lactis) protein is Nucleotide-binding protein YjiE (yjiE).